The primary structure comprises 251 residues: MSEHVYNLVKKHHSVRKFKNKPLSEDVVKKLVEAGQSASTSSFLQAYSIIGIDDEKIKENLREVSGQPYVVENGYLFVFVIDYYRHHLVDQHAETDMENAYGSTEGLLVGAIDAALVAENIAVTAEDMGYGIVFLGSLRNDVERVREILDLPDYVFPVFGMAVGEPADDENGAAKPRLPFDHVFHHNKYHADKETQYAQMADYDQTISEYYNQRTNGNRKETWSQQIEMFLGNKARLDMLEQLQKSGLIQR.

The protein belongs to the flavin oxidoreductase frp family. The cofactor is FMN.

Reduces FMN, organic nitro compounds and disulfide DTNB. Involved in maintenance of the cellular redox state and the disulfide stress response. This is NADPH-dependent oxidoreductase (nfrA) from Staphylococcus aureus (strain MSSA476).